Here is a 350-residue protein sequence, read N- to C-terminus: Twinfilin-1 (350 aa).

S2 carries the N-acetylserine modification. The ADF-H 1 domain occupies 2-139 (SHQTGIQASE…SLHGYRKYLL (138 aa)). S143 and S277 each carry phosphoserine. The 139-residue stretch at 175–313 (LQGVAFPISR…TADFLYDEVH (139 aa)) folds into the ADF-H 2 domain. Y309 is modified (phosphotyrosine). Positions 316–350 (QHAHKQSFAKPKGPAGKRGIRRLIRGPAEAEATTD) are disordered. At T349 the chain carries Phosphothreonine.

This sequence belongs to the actin-binding proteins ADF family. Twinfilin subfamily. As to quaternary structure, interacts with G-actin; ADP-actin form and capping protein (CP). May also be able to interact with TWF2 and phosphoinositides, PI(4,5)P2. When bound to PI(4,5)P2, it is down-regulated. Interacts with ACTG1. Phosphorylated on serine and threonine residues.

The protein resides in the cytoplasm. It is found in the cytoskeleton. Its function is as follows. Actin-binding protein involved in motile and morphological processes. Inhibits actin polymerization, likely by sequestering G-actin. By capping the barbed ends of filaments, it also regulates motility. Seems to play an important role in clathrin-mediated endocytosis and distribution of endocytic organelles. This chain is Twinfilin-1 (Twf1), found in Rattus norvegicus (Rat).